Reading from the N-terminus, the 672-residue chain is Putative sodium/calcium exchanger 7 (672 aa).

A signal peptide spans Met1–Ala23. Transmembrane regions (helical) follow at residues Val88 to Ala108, Val130 to Ala150, Leu164 to Leu184, Ile196 to Tyr216, Leu221 to Ala241, Leu451 to Leu471, Pro479 to Phe499, Ile522 to Val542, Gly551 to Val571, Ala581 to Ile601, Leu620 to Phe640, and Val649 to Leu669.

Belongs to the Ca(2+):cation antiporter (CaCA) (TC 2.A.19) family.

It is found in the membrane. The sequence is that of Putative sodium/calcium exchanger 7 (ncx-7) from Caenorhabditis elegans.